We begin with the raw amino-acid sequence, 308 residues long: Uricase-2 (308 aa).

Residues lysine 17 and threonine 63 each act as charge relay system in the active site. Urate contacts are provided by threonine 63, aspartate 64, phenylalanine 165, arginine 182, valine 237, glutamine 238, and asparagine 264. Catalysis depends on histidine 266, which acts as the Charge relay system. The Microbody targeting signal signature appears at 306–308 (SKL).

The protein belongs to the uricase family. In terms of assembly, homotetramer. Expressed predominantly in the uninfected cells of the central tissue of the root nodule. Also expressed in the nodule parenchyma cells and vascular tissue, in the roots, stems and leaves of uninfected adult plants, and in the cotyledons, roots and hypocotyls of developing seedlings. Localized to the metaxylem parenchyma cells and phloem fibers of developing roots.

It localises to the peroxisome. It catalyses the reaction urate + O2 + H2O = 5-hydroxyisourate + H2O2. It participates in purine metabolism; urate degradation; (S)-allantoin from urate: step 1/3. Its function is as follows. Catalyzes the oxidation of uric acid to 5-hydroxyisourate, which is further processed to form (S)-allantoin. The sequence is that of Uricase-2 (URIII) from Phaseolus vulgaris (Kidney bean).